The following is a 474-amino-acid chain: MKLSMPRFDQAPVLVVGDVMLDRYWHGATSRISPEAPVPVVRVEQHEDRPGGAANVALNIAALGAQALLVGVTGRDEAADSLANSLKAAGVDARFQRIDSQPTIVKLRVMSRHQQLLRVDFEEPFRTDAAALALDVEALLDQVKVLVLSDYGKGALQNHQVLIQAARARNIPVLADPKGKDFAIYRGASLITPNLSEFETIVGRCADEAELVAKGQALMSELELGALLVTRGEHGMTLLRHGQPALHLPARAREVFDVTGAGDTVISTLAAALAAGEELPSAVGLANLAAGIVVGKLGTAAISAPELRRAVQREQGSERGVLGLEQLLLAIEDARAHGEKIVFTNGCFDILHAGHVTYLEQARAQGDRLIVGVNDDASVTRLKGAGRPINSVDRRMAVLAGLGAVDWVVSFAEDTPERLLEQVRPDVLVKGGDYGVEQVVGAQIVKAYGGEVRVLGLVENSSTTAIVEKIRQKG.

Residues 1 to 318 are ribokinase; sequence MKLSMPRFDQ…RAVQREQGSE (318 aa). Residue 194 to 197 coordinates ATP; the sequence is NLSE. Residue Asp-263 is part of the active site. The cytidylyltransferase stretch occupies residues 343 to 474; it reads FTNGCFDILH…AIVEKIRQKG (132 aa).

It in the N-terminal section; belongs to the carbohydrate kinase PfkB family. In the C-terminal section; belongs to the cytidylyltransferase family. In terms of assembly, homodimer.

It carries out the reaction D-glycero-beta-D-manno-heptose 7-phosphate + ATP = D-glycero-beta-D-manno-heptose 1,7-bisphosphate + ADP + H(+). The enzyme catalyses D-glycero-beta-D-manno-heptose 1-phosphate + ATP + H(+) = ADP-D-glycero-beta-D-manno-heptose + diphosphate. The protein operates within nucleotide-sugar biosynthesis; ADP-L-glycero-beta-D-manno-heptose biosynthesis; ADP-L-glycero-beta-D-manno-heptose from D-glycero-beta-D-manno-heptose 7-phosphate: step 1/4. It functions in the pathway nucleotide-sugar biosynthesis; ADP-L-glycero-beta-D-manno-heptose biosynthesis; ADP-L-glycero-beta-D-manno-heptose from D-glycero-beta-D-manno-heptose 7-phosphate: step 3/4. Its function is as follows. Catalyzes the phosphorylation of D-glycero-D-manno-heptose 7-phosphate at the C-1 position to selectively form D-glycero-beta-D-manno-heptose-1,7-bisphosphate. Functionally, catalyzes the ADP transfer from ATP to D-glycero-beta-D-manno-heptose 1-phosphate, yielding ADP-D-glycero-beta-D-manno-heptose. In Pseudomonas paraeruginosa (strain DSM 24068 / PA7) (Pseudomonas aeruginosa (strain PA7)), this protein is Bifunctional protein HldE.